A 398-amino-acid chain; its full sequence is ATP-dependent RNA helicase eIF4A (398 aa).

The Q motif motif lies at 25–53 (DSFDSMDLKPELLRGVYAYGFERPSAIQQ). The region spanning 56–226 (IKPIIAGHDV…TKFMRDPIRI (171 aa)) is the Helicase ATP-binding domain. Position 69 to 76 (69 to 76 (AQSGTGKT)) interacts with ATP. The DEAD box signature appears at 174 to 177 (DEAD). The 162-residue stretch at 237 to 398 (GIKQFYIAVE…EMPMNVADLI (162 aa)) folds into the Helicase C-terminal domain.

The protein belongs to the DEAD box helicase family. eIF4A subfamily. Component of the eIF4F complex, which composition varies with external and internal environmental conditions. It is composed of at least eIF4A, eIF4E and eIF4G.

It is found in the cytoplasm. It carries out the reaction ATP + H2O = ADP + phosphate + H(+). Its function is as follows. ATP-dependent RNA helicase which is a subunit of the eIF4F complex involved in cap recognition and is required for mRNA binding to ribosome. In the current model of translation initiation, eIF4A unwinds RNA secondary structures in the 5'-UTR of mRNAs which is necessary to allow efficient binding of the small ribosomal subunit, and subsequent scanning for the initiator codon. In Aspergillus niger (strain ATCC MYA-4892 / CBS 513.88 / FGSC A1513), this protein is ATP-dependent RNA helicase eIF4A (tif1).